Reading from the N-terminus, the 1262-residue chain is Protein stoned-B (1262 aa).

4 short sequence motifs (NPF) span residues asparagine 3–phenylalanine 5, asparagine 19–phenylalanine 21, asparagine 33–phenylalanine 35, and asparagine 43–phenylalanine 45. Residues alanine 17–methionine 36 form a disordered region. Residues alanine 49 to alanine 189 form a disordered region. Positions aspartate 50 to alanine 60 are enriched in acidic residues. The segment covering proline 101–histidine 111 has biased composition (low complexity). Residues histidine 115 to proline 124 are compositionally biased toward pro residues. Residues threonine 128–glutamate 145 show a composition bias toward polar residues. Low complexity predominate over residues aspartate 172–alanine 189. The NPF 5 motif lies at asparagine 210 to phenylalanine 212. Disordered regions lie at residues valine 225–threonine 452 and glutamate 474–proline 507. Over residues lysine 233–alanine 272 the composition is skewed to pro residues. Over residues aspartate 325–glutamine 345 the composition is skewed to acidic residues. Residues glutamine 384–threonine 401 are compositionally biased toward polar residues. Positions aspartate 417–glutamate 429 are enriched in acidic residues. The NPF 6 motif lies at asparagine 493–phenylalanine 495. Serine 623 and serine 626 each carry phosphoserine. Positions serine 643–aspartate 709 are disordered. Residues asparagine 673–phenylalanine 675 carry the NPF 7 motif. Positions glycine 728–leucine 902 constitute an SHD domain. The tract at residues lysine 847–valine 1108 is interaction with Syt. The MHD domain occupies methionine 906 to glutamate 1219. The interval threonine 1226–asparagine 1262 is disordered. The segment covering proline 1241–proline 1254 has biased composition (low complexity).

This sequence belongs to the Stoned B family. In terms of assembly, interacts with the second C2 domain of Syt.

It localises to the cytoplasm. It is found in the synapse. Functionally, adapter protein involved in endocytic recycling of synaptic vesicles membranes. May act by mediating the retrieval of synaptotagmin protein Syt from the plasma membrane, thereby facilitating the internalization of multiple synaptic vesicles from the plasma membrane. The sequence is that of Protein stoned-B (stnB) from Drosophila melanogaster (Fruit fly).